Here is a 528-residue protein sequence, read N- to C-terminus: ATP synthase subunit alpha 1 (528 aa).

Position 169–176 (169–176 (GDRQTGKT)) interacts with ATP.

It belongs to the ATPase alpha/beta chains family. As to quaternary structure, F-type ATPases have 2 components, CF(1) - the catalytic core - and CF(0) - the membrane proton channel. CF(1) has five subunits: alpha(3), beta(3), gamma(1), delta(1), epsilon(1). CF(0) has three main subunits: a(1), b(2) and c(9-12). The alpha and beta chains form an alternating ring which encloses part of the gamma chain. CF(1) is attached to CF(0) by a central stalk formed by the gamma and epsilon chains, while a peripheral stalk is formed by the delta and b chains.

It is found in the cell membrane. It carries out the reaction ATP + H2O + 4 H(+)(in) = ADP + phosphate + 5 H(+)(out). Its function is as follows. Produces ATP from ADP in the presence of a proton gradient across the membrane. The alpha chain is a regulatory subunit. The protein is ATP synthase subunit alpha 1 of Mycoplasmopsis pulmonis (strain UAB CTIP) (Mycoplasma pulmonis).